Here is a 441-residue protein sequence, read N- to C-terminus: Homoserine dehydrogenase (441 aa).

The NADP(+) site is built by Asn-17 and Val-18. NAD(+)-binding residues include Val-18, Val-37, and Gly-47. Val-18 contributes to the NADPH binding site. Arg-49, Arg-50, and Lys-107 together coordinate NADP(+). NADPH is bound at residue Arg-49. An NADPH-binding site is contributed by Lys-107. Na(+)-binding residues include Glu-131, Val-134, Gly-136, and Ile-138. NADP(+)-binding residues include Gly-189 and Glu-192. L-homoserine is bound by residues Glu-192 and Asp-203. Lys-207 (proton donor) is an active-site residue. Gly-309 contributes to the NADP(+) binding site. NAD(+) is bound at residue Gly-309. Gly-309 is an NADPH binding site. Residues 356 to 435 (YVSMNVADKP…VVQGVSSVIR (80 aa)) form the ACT domain.

Belongs to the homoserine dehydrogenase family. A metal cation serves as cofactor.

It carries out the reaction L-homoserine + NADP(+) = L-aspartate 4-semialdehyde + NADPH + H(+). The enzyme catalyses L-homoserine + NAD(+) = L-aspartate 4-semialdehyde + NADH + H(+). Its pathway is amino-acid biosynthesis; L-methionine biosynthesis via de novo pathway; L-homoserine from L-aspartate: step 3/3. It functions in the pathway amino-acid biosynthesis; L-threonine biosynthesis; L-threonine from L-aspartate: step 3/5. Catalyzes the conversion of L-aspartate-beta-semialdehyde (L-Asa) to L-homoserine (L-Hse), the third step in the biosynthesis of threonine and methionine from aspartate. The protein is Homoserine dehydrogenase (hom) of Mycobacterium tuberculosis (strain CDC 1551 / Oshkosh).